A 146-amino-acid chain; its full sequence is Inclusion membrane protein D (146 aa).

2 helical membrane-spanning segments follow: residues 38–58 (AAVAVATILAIALLVVAGLLF) and 68–88 (VVAASLFFGVGAFLLGGALVG).

It localises to the secreted. The protein resides in the host vacuole. Its subcellular location is the host pathogen-containing vacuole. The protein localises to the host pathogen-containing vacuole membrane. Host inclusion membrane protein probably involved in early modification events of the chlamydial inclusion. The chain is Inclusion membrane protein D from Chlamydia trachomatis serovar L2 (strain ATCC VR-902B / DSM 19102 / 434/Bu).